Here is a 386-residue protein sequence, read N- to C-terminus: L-lactate dehydrogenase (386 aa).

Residues 1-380 (MIISASTDYR…TSDSLVQVTQ (380 aa)) form the FMN hydroxy acid dehydrogenase domain. Tyr24 is a binding site for substrate. FMN contacts are provided by Ser106 and Gln127. Tyr129 lines the substrate pocket. Thr155 is an FMN binding site. Arg164 contacts substrate. Lys251 contacts FMN. Catalysis depends on His275, which acts as the Proton acceptor. Arg278 is a binding site for substrate. Residue 306–330 (DSGIRSGLDVVRMIALGADGVMLGR) participates in FMN binding.

It belongs to the FMN-dependent alpha-hydroxy acid dehydrogenase family. FMN is required as a cofactor.

It localises to the cell inner membrane. The catalysed reaction is (S)-lactate + A = pyruvate + AH2. Its function is as follows. Catalyzes the conversion of L-lactate to pyruvate. Is coupled to the respiratory chain. This is L-lactate dehydrogenase from Pectobacterium atrosepticum (strain SCRI 1043 / ATCC BAA-672) (Erwinia carotovora subsp. atroseptica).